We begin with the raw amino-acid sequence, 305 residues long: UDP-3-O-acyl-N-acetylglucosamine deacetylase (305 aa).

Zn(2+) is bound by residues histidine 79, histidine 238, and aspartate 242. Catalysis depends on histidine 265, which acts as the Proton donor.

It belongs to the LpxC family. Zn(2+) is required as a cofactor.

The enzyme catalyses a UDP-3-O-[(3R)-3-hydroxyacyl]-N-acetyl-alpha-D-glucosamine + H2O = a UDP-3-O-[(3R)-3-hydroxyacyl]-alpha-D-glucosamine + acetate. Its pathway is glycolipid biosynthesis; lipid IV(A) biosynthesis; lipid IV(A) from (3R)-3-hydroxytetradecanoyl-[acyl-carrier-protein] and UDP-N-acetyl-alpha-D-glucosamine: step 2/6. Its function is as follows. Catalyzes the hydrolysis of UDP-3-O-myristoyl-N-acetylglucosamine to form UDP-3-O-myristoylglucosamine and acetate, the committed step in lipid A biosynthesis. In Actinobacillus succinogenes (strain ATCC 55618 / DSM 22257 / CCUG 43843 / 130Z), this protein is UDP-3-O-acyl-N-acetylglucosamine deacetylase.